The chain runs to 173 residues: Protein-export protein SecB (173 aa).

It belongs to the SecB family. In terms of assembly, homotetramer, a dimer of dimers. One homotetramer interacts with 1 SecA dimer.

It is found in the cytoplasm. Functionally, one of the proteins required for the normal export of preproteins out of the cell cytoplasm. It is a molecular chaperone that binds to a subset of precursor proteins, maintaining them in a translocation-competent state. It also specifically binds to its receptor SecA. This Novosphingobium aromaticivorans (strain ATCC 700278 / DSM 12444 / CCUG 56034 / CIP 105152 / NBRC 16084 / F199) protein is Protein-export protein SecB.